The chain runs to 373 residues: 3',5'-bisphosphate nucleotidase AHL (373 aa).

Aspartate 52 acts as the Proton acceptor in catalysis. Mg(2+) contacts are provided by glutamate 77, aspartate 144, valine 146, and aspartate 147. Residue threonine 149 is the Proton acceptor of the active site. The adenosine 3',5'-bisphosphate site is built by threonine 149, serine 281, lysine 284, lysine 298, and aspartate 310. AMP-binding residues include serine 281, lysine 284, lysine 298, and aspartate 310. Mg(2+) is bound at residue aspartate 310.

The protein belongs to the inositol monophosphatase superfamily. The cofactor is Mg(2+). In terms of tissue distribution, expressed in roots, leaves, stems, flowers and siliques.

The enzyme catalyses adenosine 3',5'-bisphosphate + H2O = AMP + phosphate. It carries out the reaction 3'-phosphoadenylyl sulfate + H2O = adenosine 5'-phosphosulfate + phosphate. With respect to regulation, inhibited by Li(+) (IC(50)=10 mM), Na(+) (IC(50)=50 mM) and Ca(2+) (IC(50)=0.06 mM). In terms of biological role, phosphatase that converts adenosine 3'-phosphate 5'-phosphosulfate (PAPS) to adenosine 5'-phosphosulfate (APS) and 3'-phosphoadenosine 5'-phosphate (3'-PAP) to AMP. May regulate the flux of sulfur in the sulfur-activation pathway by converting PAPS to APS. Prevents both the toxicity of PAP on RNA processing enzymes as well as the product inhibition by PAP of sulfate conjugation. The sequence is that of 3',5'-bisphosphate nucleotidase AHL from Arabidopsis thaliana (Mouse-ear cress).